Reading from the N-terminus, the 1006-residue chain is Kinesin-like protein KIN-5C (1006 aa).

The 347-residue stretch at 9–355 (NVQVLLRCRP…LDYAHRAKNI (347 aa)) folds into the Kinesin motor domain. 95–102 (GQTGTGKT) provides a ligand contact to ATP. A coiled-coil region spans residues 371–522 (IKDLYGEIER…NASLFQKIAR (152 aa)).

The protein belongs to the TRAFAC class myosin-kinesin ATPase superfamily. Kinesin family. KIN-5/BimC subfamily.

The protein resides in the cytoplasm. It localises to the cytoskeleton. The protein localises to the spindle. Its function is as follows. Responsible for microtubule translocation. May be important for the organization of phragmoplast-specific arrays of microtubules. Plays an essential role in stabilizing the mitotic spindle. Required during mitotic cytokinesis. The sequence is that of Kinesin-like protein KIN-5C from Nicotiana tabacum (Common tobacco).